Consider the following 177-residue polypeptide: ATP synthase subunit delta (177 aa).

The protein belongs to the ATPase delta chain family. In terms of assembly, F-type ATPases have 2 components, F(1) - the catalytic core - and F(0) - the membrane proton channel. F(1) has five subunits: alpha(3), beta(3), gamma(1), delta(1), epsilon(1). F(0) has three main subunits: a(1), b(2) and c(10-14). The alpha and beta chains form an alternating ring which encloses part of the gamma chain. F(1) is attached to F(0) by a central stalk formed by the gamma and epsilon chains, while a peripheral stalk is formed by the delta and b chains.

It is found in the cell inner membrane. In terms of biological role, f(1)F(0) ATP synthase produces ATP from ADP in the presence of a proton or sodium gradient. F-type ATPases consist of two structural domains, F(1) containing the extramembraneous catalytic core and F(0) containing the membrane proton channel, linked together by a central stalk and a peripheral stalk. During catalysis, ATP synthesis in the catalytic domain of F(1) is coupled via a rotary mechanism of the central stalk subunits to proton translocation. This protein is part of the stalk that links CF(0) to CF(1). It either transmits conformational changes from CF(0) to CF(1) or is implicated in proton conduction. The sequence is that of ATP synthase subunit delta from Shewanella pealeana (strain ATCC 700345 / ANG-SQ1).